Here is a 550-residue protein sequence, read N- to C-terminus: Methionine--tRNA ligase (550 aa).

The 'HIGH' region signature appears at 10–22 (LPYPNNSSPHLGN). The 'KMSKS' region motif lies at 336 to 340 (KFSKS). K339 provides a ligand contact to ATP.

The protein belongs to the class-I aminoacyl-tRNA synthetase family.

It carries out the reaction tRNA(Met) + L-methionine + ATP = L-methionyl-tRNA(Met) + AMP + diphosphate. The chain is Methionine--tRNA ligase (MARS) from Acanthamoeba polyphaga mimivirus (APMV).